We begin with the raw amino-acid sequence, 234 residues long: RNA-binding protein pno1 (234 aa).

Residues 1 to 39 (MPTQDSAAKQADDGFQLVQKKSRKRKMTMDMDDADPKAG) form a disordered region. Residues 158-207 (LARCIGRLAGKGGRTKFTIENVTKTRIVLADSKVHILGSYQNIRAARTAL) enclose the KH domain.

This sequence belongs to the PNO1 family.

It is found in the nucleus. The protein localises to the nucleolus. In Ixodes scapularis (Black-legged tick), this protein is RNA-binding protein pno1.